A 281-amino-acid polypeptide reads, in one-letter code: Insulin-like growth factor-binding protein 7 (281 aa).

An N-terminal signal peptide occupies residues 1-25 (MERPPRALLLGAAGLLLLLLPLSSS). The IGFBP N-terminal domain occupies 27-113 (SSDACGPCVP…PATLAVCVCK (87 aa)). Cystine bridges form between Cys-31/Cys-56, Cys-34/Cys-58, Cys-39/Cys-59, Cys-47/Cys-62, Cys-70/Cys-86, Cys-80/Cys-110, Cys-112/Cys-130, and Cys-119/Cys-155. The Kazal-like domain maps to 98 to 157 (GAAAGGPATLAVCVCKSRYPVCGSNGITYPSGCQLRAASLRAESRGEKAITQVSKGTCEQ). The Ig-like C2-type domain maps to 159 to 263 (PSIVTPPKDI…GQASAAAKIT (105 aa)). A glycan (N-linked (GlcNAc...) asparagine) is linked at Asn-170. Cys-180 and Cys-247 are disulfide-bonded. Phosphoserine is present on Ser-238.

As to quaternary structure, may interact with VPS24/CHMP3; the relevance of such interaction however remains unclear. Interacts with CD93; this interaction plays a role in endothelial cells angiogenesis. In terms of processing, N-glycosylated. In terms of tissue distribution, expressed at high levels in lung, kidney, small intestine, testis and uterus and at moderate levels in liver.

Its subcellular location is the secreted. Functionally, binds IGF1 and IGF2 with a relatively low affinity. Stimulates prostacyclin (PGI2) production. Stimulates cell adhesion. Acts as a ligand for CD93 to play a role in angiogenesis. The protein is Insulin-like growth factor-binding protein 7 (Igfbp7) of Mus musculus (Mouse).